The primary structure comprises 276 residues: Large ribosomal subunit protein uL2 (276 aa).

Disordered regions lie at residues 35–58 (RKLS…GGGH) and 218–276 (RPIT…KNRK). Residues 255 to 276 (RRPKKASNKMIVRRRPNGKNRK) show a composition bias toward basic residues.

Belongs to the universal ribosomal protein uL2 family. In terms of assembly, part of the 50S ribosomal subunit. Forms a bridge to the 30S subunit in the 70S ribosome.

One of the primary rRNA binding proteins. Required for association of the 30S and 50S subunits to form the 70S ribosome, for tRNA binding and peptide bond formation. It has been suggested to have peptidyltransferase activity; this is somewhat controversial. Makes several contacts with the 16S rRNA in the 70S ribosome. The protein is Large ribosomal subunit protein uL2 of Bifidobacterium adolescentis (strain ATCC 15703 / DSM 20083 / NCTC 11814 / E194a).